Here is a 799-residue protein sequence, read N- to C-terminus: Ribosome biogenesis protein BOP1 homolog (799 aa).

The interval 1-171 is disordered; the sequence is MPRRVRAQKR…DDTSDEEHSL (171 aa). A compositionally biased stretch (acidic residues) spans 58 to 69; it reads SESDVTDDEQID. Basic and acidic residues predominate over residues 70–81; sequence EEARQADRDLLK. A compositionally biased stretch (acidic residues) spans 93–121; it reads DPSDADNDDDDDEEEAASDDDDEEEDAEP. Positions 122 to 132 are enriched in low complexity; that stretch reads SSDSSNEASDA. 7 WD repeats span residues 457–498, 500–538, 584–626, 629–669, 670–709, 713–752, and 769–799; these read GHKA…RVVT, DAEV…AAID, PHHA…TQHP, KRNR…KKLL, TGVR…KPYK, YHKY…DLGQ, and SDGM…KLHV.

It belongs to the WD repeat BOP1/ERB1 family.

The protein resides in the nucleus. Its subcellular location is the nucleolus. It is found in the nucleoplasm. Its function is as follows. Required for maturation of ribosomal RNAs and formation of the large ribosomal subunit. The polypeptide is Ribosome biogenesis protein BOP1 homolog (Monosiga brevicollis (Choanoflagellate)).